A 415-amino-acid chain; its full sequence is Trans-acting factor B (415 aa).

Functionally, plasmid partition require REP1, REP2, and a cis-acting DNA sequence (known as STB). REP1 may act by intercalating in the yeast nuclear matrix and binding STB either directly or via REP2. This chain is Trans-acting factor B (B), found in Kluyveromyces lactis (Yeast).